The primary structure comprises 187 residues: uncharacterized protein (187 aa).

One can recognise an HTH tetR-type domain in the interval 6–66 (TDLAEQIFSA…QFAHRVFSMF (61 aa)). The segment at residues 29 to 48 (SMLKLAKEANVAAGTIYLYF) is a DNA-binding region (H-T-H motif).

This is an uncharacterized protein from Haemophilus influenzae (strain ATCC 51907 / DSM 11121 / KW20 / Rd).